The following is a 227-amino-acid chain: GTP:AMP phosphotransferase AK3, mitochondrial (227 aa).

Residues G17, G19, K20, G21, and T22 each contribute to the GTP site. An N6-succinyllysine modification is found at K20. K29 is subject to N6-acetyllysine; alternate. K29 carries the post-translational modification N6-succinyllysine; alternate. N6-acetyllysine is present on K34. S37 is subject to Phosphoserine. Positions 37–66 (SSGDLLRQNMLQGTEIAVLAKSFIDQGKLI) are NMP. Residues S38 and R43 each contribute to the AMP site. Residue K57 is modified to N6-succinyllysine. 2 positions are modified to N6-acetyllysine; alternate: K64 and K80. Residues K64 and K80 each carry the N6-succinyllysine; alternate modification. K64 serves as a coordination point for AMP. Positions 91, 94, and 98 each coordinate AMP. Residues 127-164 (ARWIHPASGRVYNIEFNPPKTVGIDDLTGEPLIQREDD) are LID. 5 residues coordinate GTP: R128, Y138, N139, R161, and R172. N6-acetyllysine; alternate occurs at positions 174 and 189. N6-succinyllysine; alternate is present on residues K174 and K189. Residue T201 participates in GTP binding. An N6-acetyllysine modification is found at K203.

It belongs to the adenylate kinase family. AK3 subfamily. Monomer.

It localises to the mitochondrion matrix. It carries out the reaction a ribonucleoside 5'-triphosphate + AMP = a ribonucleoside 5'-diphosphate + ADP. The catalysed reaction is GTP + AMP = GDP + ADP. The enzyme catalyses ITP + AMP = IDP + ADP. Functionally, mitochondrial adenylate kinase with a specific GTP:AMP phosphotransferase activity. Could also use ITP as phosphate donor. Its physiological function is to recycle GTP into GDP which is necessary for the TCA cycle in the mitochondrial matrix. The chain is GTP:AMP phosphotransferase AK3, mitochondrial from Rattus norvegicus (Rat).